A 201-amino-acid chain; its full sequence is uncharacterized protein (201 aa).

Coiled-coil stretches lie at residues 3-43 (YMDD…EVYK) and 76-120 (TGQV…AKTK).

This is an uncharacterized protein from Archaeoglobus fulgidus (strain ATCC 49558 / DSM 4304 / JCM 9628 / NBRC 100126 / VC-16).